The sequence spans 198 residues: MAAAMGLERKAKVAEVALRCAVCALAALAAALVGTGSQTRTFFSLEKKARFTDMKALVLLVAAHGAAAVYSLLQLARCAAAAAWKGGSNGGAAVVAWSVFSCDQAVAYALMAATAAALQSSVVGKRGQPELQWMPVCGLYGAFCRRVGEGLAAAVAAGLAAVLLAAVSAFNLFRLYGGGGGGRKSSAGAVSGNGANTW.

At 1–12 (MAAAMGLERKAK) the chain is on the cytoplasmic side. Residues 13-33 (VAEVALRCAVCALAALAAALV) form a helical membrane-spanning segment. At 34–55 (GTGSQTRTFFSLEKKARFTDMK) the chain is on the extracellular side. Residues 56–76 (ALVLLVAAHGAAAVYSLLQLA) traverse the membrane as a helical segment. Topologically, residues 77–91 (RCAAAAAWKGGSNGG) are cytoplasmic. A helical transmembrane segment spans residues 92–112 (AAVVAWSVFSCDQAVAYALMA). Over 113–149 (ATAAALQSSVVGKRGQPELQWMPVCGLYGAFCRRVGE) the chain is Extracellular. A helical transmembrane segment spans residues 150-170 (GLAAAVAAGLAAVLLAAVSAF). At 171–198 (NLFRLYGGGGGGRKSSAGAVSGNGANTW) the chain is on the cytoplasmic side.

The protein belongs to the Casparian strip membrane proteins (CASP) family. In terms of assembly, homodimer and heterodimers.

Its subcellular location is the cell membrane. The chain is CASP-like protein 2B1 from Oryza sativa subsp. japonica (Rice).